The sequence spans 106 residues: uncharacterized protein (106 aa).

The protein to the N-terminal of E.carotovora exoenzyme regulation regulon ORF1. The C-terminal part is colinear with YqcB. It to E.coli YqcC.

This is an uncharacterized protein from Haemophilus influenzae (strain ATCC 51907 / DSM 11121 / KW20 / Rd).